Consider the following 283-residue polypeptide: Pantothenate synthetase (283 aa).

An ATP-binding site is contributed by 26-33 (MGNLHDGH). The active-site Proton donor is the H33. Q57 serves as a coordination point for (R)-pantoate. Q57 contributes to the beta-alanine binding site. 148 to 151 (GKKD) is an ATP binding site. Q154 serves as a coordination point for (R)-pantoate. Residues A177 and 185 to 188 (LSSR) each bind ATP.

It belongs to the pantothenate synthetase family. As to quaternary structure, homodimer.

The protein localises to the cytoplasm. It catalyses the reaction (R)-pantoate + beta-alanine + ATP = (R)-pantothenate + AMP + diphosphate + H(+). The protein operates within cofactor biosynthesis; (R)-pantothenate biosynthesis; (R)-pantothenate from (R)-pantoate and beta-alanine: step 1/1. In terms of biological role, catalyzes the condensation of pantoate with beta-alanine in an ATP-dependent reaction via a pantoyl-adenylate intermediate. This is Pantothenate synthetase from Delftia acidovorans (strain DSM 14801 / SPH-1).